Consider the following 213-residue polypeptide: Pyrrolidone-carboxylate peptidase (213 aa).

Active-site residues include Glu-80, Cys-143, and His-166.

The protein belongs to the peptidase C15 family. In terms of assembly, homotetramer.

It localises to the cytoplasm. It carries out the reaction Release of an N-terminal pyroglutamyl group from a polypeptide, the second amino acid generally not being Pro.. Removes 5-oxoproline from various penultimate amino acid residues except L-proline. The sequence is that of Pyrrolidone-carboxylate peptidase from Clavibacter michiganensis subsp. michiganensis (strain NCPPB 382).